The following is a 143-amino-acid chain: 3-hydroxyacyl-[acyl-carrier-protein] dehydratase FabZ (143 aa).

Residue His49 is part of the active site.

This sequence belongs to the thioester dehydratase family. FabZ subfamily.

It localises to the cytoplasm. The enzyme catalyses a (3R)-hydroxyacyl-[ACP] = a (2E)-enoyl-[ACP] + H2O. Its function is as follows. Involved in unsaturated fatty acids biosynthesis. Catalyzes the dehydration of short chain beta-hydroxyacyl-ACPs and long chain saturated and unsaturated beta-hydroxyacyl-ACPs. This chain is 3-hydroxyacyl-[acyl-carrier-protein] dehydratase FabZ, found in Wolbachia pipientis wMel.